The sequence spans 1033 residues: Tyrosine-protein kinase-like otk (1033 aa).

The signal sequence occupies residues 1–22 (MTARMISIYGLVLASMMASVLA). The Extracellular segment spans residues 23 to 581 (SSSRFQRLPQ…GGDGFLVTRA (559 aa)). Ig-like C2-type domains lie at 25 to 114 (SRFQ…AKLS), 113 to 199 (LSVI…RVMS), 251 to 365 (PEDL…VPVS), 368 to 463 (PGVL…VAIN), and 468 to 558 (PKFS…VQLI). A glycan (N-linked (GlcNAc...) asparagine) is linked at N39. Disulfide bonds link C46-C95, C137-C188, C276-C354, and C399-C447. 7 N-linked (GlcNAc...) asparagine glycosylation sites follow: N336, N417, N429, N444, N457, N512, and N524. The cysteines at positions 490 and 542 are disulfide-linked. The chain crosses the membrane as a helical span at residues 582–602 (VLITMTVALAYIVLVVGLMLW). Residues 603 to 1033 (CRYRRQARKA…LSKAMQSAEK (431 aa)) lie on the Cytoplasmic side of the membrane. 2 disordered regions span residues 617–679 (LSTK…KKSA) and 718–760 (SPSD…KTSM). Residues 655–673 (KSSGDAQKSDDTACSQQSR) show a composition bias toward polar residues. S678 carries the post-translational modification Phosphoserine. Positions 692–1028 (LSELIQIGRG…QLGAALSKAM (337 aa)) constitute a Protein kinase; inactive domain. Over residues 720–731 (SDKDADTEKQHS) the composition is skewed to basic and acidic residues.

Belongs to the protein kinase superfamily. Tyr protein kinase family. Insulin receptor subfamily. As to quaternary structure, interacts with plexA; component of a receptor complex that mediates the repulsive signaling in response to Semaphorin ligands.

It is found in the cell membrane. Functionally, acts as a calcium-dependent, homophilic cell adhesion molecule that regulates neural recognition during the development of the nervous system. Component of the repulsive Plexin signaling response to regulate motor axon guidance at the embryonic stage. Also component of a receptor complex that is required in the adult visual system to innervate the lamina layer; specific targeting of R1-R6 axons. The protein is Tyrosine-protein kinase-like otk of Drosophila yakuba (Fruit fly).